The chain runs to 142 residues: Large ribosomal subunit protein uL13 (142 aa).

It belongs to the universal ribosomal protein uL13 family. Part of the 50S ribosomal subunit.

Its function is as follows. This protein is one of the early assembly proteins of the 50S ribosomal subunit, although it is not seen to bind rRNA by itself. It is important during the early stages of 50S assembly. In Psychrobacter cryohalolentis (strain ATCC BAA-1226 / DSM 17306 / VKM B-2378 / K5), this protein is Large ribosomal subunit protein uL13.